A 453-amino-acid polypeptide reads, in one-letter code: tRNA(Ile)-lysidine synthase (453 aa).

27–32 (SGGSDS) contributes to the ATP binding site.

Belongs to the tRNA(Ile)-lysidine synthase family.

Its subcellular location is the cytoplasm. The catalysed reaction is cytidine(34) in tRNA(Ile2) + L-lysine + ATP = lysidine(34) in tRNA(Ile2) + AMP + diphosphate + H(+). Functionally, ligates lysine onto the cytidine present at position 34 of the AUA codon-specific tRNA(Ile) that contains the anticodon CAU, in an ATP-dependent manner. Cytidine is converted to lysidine, thus changing the amino acid specificity of the tRNA from methionine to isoleucine. The chain is tRNA(Ile)-lysidine synthase from Rhizobium meliloti (strain 1021) (Ensifer meliloti).